The primary structure comprises 430 residues: MNFVEELRWRGMVHDMMPGTEELLAKEQVTAYVGIDPTADSLHIGHLCGVMILRHFQRCGHKPLALIGGATGMIGDPSGKSAERNLLDEETLRHNQACIKKQLAKFLDFESDAPNRAELVNNYDWMKEFTFLDFAREVGKHITVNYMMAKESVKKRLNGEARDGLSFTEFTYQLLQGYDFLHLYETKGCKLQMGGSDQWGNITTGTELIRRTNGGEAYALTCPLITKADGGKFGKTESGNIWLDPRYTSPYKFYQFWLNVSDADAERYIKIFTSLDKAEIDGLIAEHNEAPHLRVLQKRLAKEVTVMVHSEEDYNAAVDASNILFGNATSDALKKLDEDTLLAVFEGVPQFEISRDALAEGVKAVDLFVDNAAVFASKGEMRKLVQGGGVSLNKEKLAAFDQVITTADLLDEKYLLVQRGKKNYYLIIAK.

Residue Tyr-32 coordinates L-tyrosine. Positions 37-46 (PTADSLHIGH) match the 'HIGH' region motif. Residues Tyr-172 and Gln-176 each coordinate L-tyrosine. Positions 232–236 (KFGKT) match the 'KMSKS' region motif. Residue Lys-235 coordinates ATP. The 68-residue stretch at 362–429 (VKAVDLFVDN…GKKNYYLIIA (68 aa)) folds into the S4 RNA-binding domain.

Belongs to the class-I aminoacyl-tRNA synthetase family. TyrS type 1 subfamily. In terms of assembly, homodimer.

The protein localises to the cytoplasm. The enzyme catalyses tRNA(Tyr) + L-tyrosine + ATP = L-tyrosyl-tRNA(Tyr) + AMP + diphosphate + H(+). In terms of biological role, catalyzes the attachment of tyrosine to tRNA(Tyr) in a two-step reaction: tyrosine is first activated by ATP to form Tyr-AMP and then transferred to the acceptor end of tRNA(Tyr). This Bacteroides fragilis (strain ATCC 25285 / DSM 2151 / CCUG 4856 / JCM 11019 / LMG 10263 / NCTC 9343 / Onslow / VPI 2553 / EN-2) protein is Tyrosine--tRNA ligase.